A 70-amino-acid chain; its full sequence is U-actitoxin-Ael2c (70 aa).

Positions 1 to 21 (SYQRFLFLVVVASLIATSLAI) are cleaved as a signal peptide. A propeptide spanning residues 22–26 (PKDLE) is cleaved from the precursor. Cystine bridges form between Cys-32–Cys-65, Cys-34–Cys-58, and Cys-48–Cys-66.

It belongs to the sea anemone type 3 (BDS) potassium channel toxin family.

The protein localises to the secreted. It is found in the nematocyst. In terms of biological role, potently and selectively inhibits voltage-gated potassium channels Kv11/KCNH/ERG. Acts as a gating-modifier toxin that shifts the voltage-dependence of ERG activation in the positive direction and suppresses its current amplitudes elicited by strong depolarizing pulses that maximally activate the channels. This is U-actitoxin-Ael2c from Anthopleura elegantissima (Green aggregating anemone).